The sequence spans 400 residues: Na(+)/H(+) antiporter NhaA (400 aa).

11 helical membrane passes run 10–30 (FNLE…AMII), 60–80 (AHHW…GLEL), 95–115 (IILP…VYLF), 126–146 (GWAI…SLLG), 155–175 (VFLV…IALF), 178–198 (NDLS…LYML), 218–238 (IAVL…ALFI), 265–285 (GILP…AGFG), 295–315 (IAAG…WLIF), 334–354 (AALL…LAFA), and 364–384 (LGII…LKTT).

Belongs to the NhaA Na(+)/H(+) (TC 2.A.33) antiporter family.

It localises to the cell inner membrane. The catalysed reaction is Na(+)(in) + 2 H(+)(out) = Na(+)(out) + 2 H(+)(in). Na(+)/H(+) antiporter that extrudes sodium in exchange for external protons. The protein is Na(+)/H(+) antiporter NhaA of Psychrobacter arcticus (strain DSM 17307 / VKM B-2377 / 273-4).